The primary structure comprises 249 residues: Phosphoribosylaminoimidazole-succinocarboxamide synthase (249 aa).

Belongs to the SAICAR synthetase family.

It carries out the reaction 5-amino-1-(5-phospho-D-ribosyl)imidazole-4-carboxylate + L-aspartate + ATP = (2S)-2-[5-amino-1-(5-phospho-beta-D-ribosyl)imidazole-4-carboxamido]succinate + ADP + phosphate + 2 H(+). Its pathway is purine metabolism; IMP biosynthesis via de novo pathway; 5-amino-1-(5-phospho-D-ribosyl)imidazole-4-carboxamide from 5-amino-1-(5-phospho-D-ribosyl)imidazole-4-carboxylate: step 1/2. This Roseiflexus sp. (strain RS-1) protein is Phosphoribosylaminoimidazole-succinocarboxamide synthase.